Reading from the N-terminus, the 331-residue chain is CRISPR-associated endonuclease Cas1 (331 aa).

Mn(2+) is bound by residues glutamate 155, histidine 221, and glutamate 236.

This sequence belongs to the CRISPR-associated endonuclease Cas1 family. Homodimer, forms a heterotetramer with a Cas2 homodimer. Requires Mg(2+) as cofactor. The cofactor is Mn(2+).

Its function is as follows. CRISPR (clustered regularly interspaced short palindromic repeat), is an adaptive immune system that provides protection against mobile genetic elements (viruses, transposable elements and conjugative plasmids). CRISPR clusters contain spacers, sequences complementary to antecedent mobile elements, and target invading nucleic acids. CRISPR clusters are transcribed and processed into CRISPR RNA (crRNA). Acts as a dsDNA endonuclease. Involved in the integration of spacer DNA into the CRISPR cassette. In Methanopyrus kandleri (strain AV19 / DSM 6324 / JCM 9639 / NBRC 100938), this protein is CRISPR-associated endonuclease Cas1.